A 292-amino-acid polypeptide reads, in one-letter code: Pyridoxal 5'-phosphate synthase subunit PdxS (292 aa).

D-ribose 5-phosphate is bound at residue Asp-22. Residue Lys-79 is the Schiff-base intermediate with D-ribose 5-phosphate of the active site. Gly-151 lines the D-ribose 5-phosphate pocket. Arg-163 contacts D-glyceraldehyde 3-phosphate. Residues Gly-212 and 233–234 each bind D-ribose 5-phosphate; that span reads GS.

This sequence belongs to the PdxS/SNZ family. As to quaternary structure, in the presence of PdxT, forms a dodecamer of heterodimers.

It carries out the reaction aldehydo-D-ribose 5-phosphate + D-glyceraldehyde 3-phosphate + L-glutamine = pyridoxal 5'-phosphate + L-glutamate + phosphate + 3 H2O + H(+). The protein operates within cofactor biosynthesis; pyridoxal 5'-phosphate biosynthesis. Catalyzes the formation of pyridoxal 5'-phosphate from ribose 5-phosphate (RBP), glyceraldehyde 3-phosphate (G3P) and ammonia. The ammonia is provided by the PdxT subunit. Can also use ribulose 5-phosphate and dihydroxyacetone phosphate as substrates, resulting from enzyme-catalyzed isomerization of RBP and G3P, respectively. The protein is Pyridoxal 5'-phosphate synthase subunit PdxS of Ruminiclostridium cellulolyticum (strain ATCC 35319 / DSM 5812 / JCM 6584 / H10) (Clostridium cellulolyticum).